The primary structure comprises 950 residues: MTQVNLGTANEFIARHIGPRAGDEQAMLNSLGFDSLEALSASVIPESIKGTSVLGLDDGLSEADALAMIKGIAGKNQLFKTYIGQGYYNCHTPSPILRNLLENPAWYTAYTPYQPEISQGRLEALLNFQTLISDLTGLPIANASLLDEATAAAEAMTFCKRLSKNKGSHQFFASIHSHTQTLDVLRTRAEPLGIDVVVGDERELTDVTPFFGALLQYPASNGDVFDYRELTERFHAANALVAVAADLLALTLLTPPGEFGADVAIGSAQRFGVPLGFGGPHAAYFSTKDAFKRDMPGRLVGVSVDRFGKPALRLAMQTREQHIRREKATSNICTAQVLLANIASMYAVYHGPKGLTQIANRVHHLTAILAKGLSALGVTVEQTSFFDTLTLATGAQTAALHDKARAQQINLRVIDAQRLGLSVDETTTQADIETLWGLFADGKTLPDFAALAAAAQSTIPASLVRQSPILSHPVFNRYHSETELMRYLRKLADKDLALDRTMIPLGSCTMKLNAASEMIPVTWAEFGALHPFAPAEQSAGYQQLTDELEAMLCAATGYDSISLQPNAGSQGEYAGLLAIRAYHQSRGEDRRDICLIPSSAHGTNPATANMAGMRVVVTACDARGNVDIEDLRAKAIEHREHLAALMITYPSTHGVFEEGIREICGIIHDNGGQVYIDGANMNAMVGLCAPGKFGGDVSHLNLHKTFCIPHGGGGPGVGPIGVKSHLTPFLPGHGHMERKEGAVCAAPFGSASILPITWMYIRMMGGAGLKRASQLAILNANYISRRLEEHYPVLYTGSNGLVAHECILDLRPLKDSSGISVDDVAKRLIDFGFHAPTMSFPVAGTLMIEPTESESKEELDRFCDAMIRIREEIRAVENGTLDKDDNPLKNAPHTAAELVGEWTHPYSREQAVYPVASLIEGKYWPPVGRVDNVFGDRNLVCACPSIESYA.

An N6-(pyridoxal phosphate)lysine modification is found at lysine 704.

The protein belongs to the GcvP family. In terms of assembly, the glycine cleavage system is composed of four proteins: P, T, L and H. Requires pyridoxal 5'-phosphate as cofactor.

It catalyses the reaction N(6)-[(R)-lipoyl]-L-lysyl-[glycine-cleavage complex H protein] + glycine + H(+) = N(6)-[(R)-S(8)-aminomethyldihydrolipoyl]-L-lysyl-[glycine-cleavage complex H protein] + CO2. Functionally, the glycine cleavage system catalyzes the degradation of glycine. The P protein binds the alpha-amino group of glycine through its pyridoxal phosphate cofactor; CO(2) is released and the remaining methylamine moiety is then transferred to the lipoamide cofactor of the H protein. The polypeptide is Glycine dehydrogenase (decarboxylating) 1 (Pseudomonas fluorescens (strain Pf0-1)).